Consider the following 463-residue polypeptide: ATP synthase subunit beta (463 aa).

Residue 152 to 159 coordinates ATP; that stretch reads GGAGVGKT.

Belongs to the ATPase alpha/beta chains family. F-type ATPases have 2 components, CF(1) - the catalytic core - and CF(0) - the membrane proton channel. CF(1) has five subunits: alpha(3), beta(3), gamma(1), delta(1), epsilon(1). CF(0) has three main subunits: a(1), b(2) and c(9-12). The alpha and beta chains form an alternating ring which encloses part of the gamma chain. CF(1) is attached to CF(0) by a central stalk formed by the gamma and epsilon chains, while a peripheral stalk is formed by the delta and b chains.

It localises to the cell inner membrane. The enzyme catalyses ATP + H2O + 4 H(+)(in) = ADP + phosphate + 5 H(+)(out). Functionally, produces ATP from ADP in the presence of a proton gradient across the membrane. The catalytic sites are hosted primarily by the beta subunits. This Shewanella putrefaciens (strain CN-32 / ATCC BAA-453) protein is ATP synthase subunit beta.